A 382-amino-acid chain; its full sequence is MKNAVHFGAGNIGRGFIGKLLADAEVEVTFADVDVPLVDQLSHKQEYKVKVVGTECKIDTVTHVTAVNSASEDVIDRIVKTDLVTTAVGPNVLDIIAKTIAKGIAKRFEAGNDAPLNIIACENMVRGTTHLKGEVYKHLDKSLHAKADELVGFVDSAVDRIVPPAEAANDDPLEVTVESFSEWIVDEQQFKGDIPNIAGMEKTNNLMAFVERKLFTLNTGHCITAYLGCLKGHRTIREAIEDPNIHAEVKQAMQESGEVLIRRYGFDHDMHNAYIEKILGRFANPYLVDEVDRVGRQPIRKLGANDRLVKPLLGTIEYGTENQTLLKGIAAALKYTNDTDPQAVELQTSLKEVGVTKTLAKYTGLAEDSDEVAQIETLYNQL.

NAD(+) is bound at residue 4–15 (AVHFGAGNIGRG).

This sequence belongs to the mannitol dehydrogenase family.

It catalyses the reaction D-mannitol 1-phosphate + NAD(+) = beta-D-fructose 6-phosphate + NADH + H(+). This chain is Mannitol-1-phosphate 5-dehydrogenase, found in Vibrio parahaemolyticus serotype O3:K6 (strain RIMD 2210633).